Here is a 1032-residue protein sequence, read N- to C-terminus: Reticulon-3 (1032 aa).

The span at methionine 1–alanine 24 shows a compositional bias: low complexity. Residues methionine 1–leucine 61 are disordered. Alanine 2 carries the post-translational modification N-acetylalanine. Residues alanine 2–threonine 863 are Cytoplasmic-facing. Serine 30 carries the post-translational modification Phosphoserine. Over residues glycine 32–leucine 61 the composition is skewed to low complexity. Serine 229, serine 243, serine 246, serine 283, serine 316, and serine 453 each carry phosphoserine. Positions cysteine 545 to glutamine 568 are enriched in basic and acidic residues. A disordered region spans residues cysteine 545–proline 617. Positions threonine 605 to proline 617 are enriched in polar residues. 2 positions are modified to phosphoserine: serine 649 and serine 650. Residues asparagine 696–lysine 715 are compositionally biased toward basic and acidic residues. A disordered region spans residues asparagine 696–phenylalanine 726. At serine 735 the chain carries Phosphoserine. Residues valine 844–glutamate 1032 form the Reticulon domain. Residues leucine 864–leucine 887 constitute an intramembrane region (helical). The Cytoplasmic portion of the chain corresponds to serine 888 to arginine 947. An intramembrane region (helical) is located at residues leucine 948–threonine 968. Residues tyrosine 969–alanine 972 lie on the Cytoplasmic side of the membrane. Residues valine 973–valine 993 constitute an intramembrane region (helical). An interaction with FADD region spans residues isoleucine 987 to glutamate 1032. The Cytoplasmic portion of the chain corresponds to tyrosine 994–glutamate 1032. The segment at glutamine 1000–aspartate 1002 is interaction with BACE1.

Homodimer. Interacts with ATL1. Interacts with RTN4. Isoform 3 interacts with BACE1, BACE2, BCL2 and FADD. Interacts with ATL2. Interacts with TMEM33. Interacts with ZFYVE27 and with KIF5A in a ZFYVE27-dependent manner. Interacts with RIGI. Interacts with TRIM25. In terms of assembly, (Microbial infection) Interacts with Coxsackievirus A16, enterovirus 71 and poliovirus P2C proteins. As to quaternary structure, (Microbial infection) Interacts with West Nile virus protein NS4A. In terms of tissue distribution, isoform 3 is widely expressed, with highest levels in brain, where it is enriched in neuronal cell bodies from gray matter (at protein level). Three times more abundant in macula than in peripheral retina. Isoform 1 is expressed at high levels in brain and at low levels in skeletal muscle. Isoform 2 is only found in melanoma.

Its subcellular location is the endoplasmic reticulum membrane. It localises to the golgi apparatus membrane. Its function is as follows. May be involved in membrane trafficking in the early secretory pathway. Inhibits BACE1 activity and amyloid precursor protein processing. May induce caspase-8 cascade and apoptosis. May favor BCL2 translocation to the mitochondria upon endoplasmic reticulum stress. Induces the formation of endoplasmic reticulum tubules. Also acts as an inflammation-resolving regulator by interacting with both TRIM25 and RIGI, subsequently impairing RIGI 'Lys-63'-linked polyubiquitination leading to IRF3 and NF-kappa-B inhibition. In terms of biological role, (Microbial infection) Plays a positive role in viral replication and pathogenesis of enteroviruses. The polypeptide is Reticulon-3 (RTN3) (Homo sapiens (Human)).